Here is a 428-residue protein sequence, read N- to C-terminus: GTPase Obg (428 aa).

The Obg domain occupies 1–158 (MFVDQVKIYV…RYIVLELKVL (158 aa)). The segment at 118 to 143 (KGGRGGRGNTRFATPANPAPQLSENG) is disordered. Positions 159-329 (ADVGLVGFPS…LLFEIADRLE (171 aa)) constitute an OBG-type G domain. Residues 165 to 172 (GFPSVGKS), 190 to 194 (FTTLN), 212 to 215 (DLPG), 282 to 285 (NKMD), and 310 to 312 (SAV) each bind GTP. 2 residues coordinate Mg(2+): Ser-172 and Thr-192. In terms of domain architecture, OCT spans 350–428 (KLEDEEAPFE…LLEFEFEFID (79 aa)).

This sequence belongs to the TRAFAC class OBG-HflX-like GTPase superfamily. OBG GTPase family. In terms of assembly, monomer. The cofactor is Mg(2+).

Its subcellular location is the cytoplasm. In terms of biological role, an essential GTPase which binds GTP, GDP and possibly (p)ppGpp with moderate affinity, with high nucleotide exchange rates and a fairly low GTP hydrolysis rate. Plays a role in control of the cell cycle, stress response, ribosome biogenesis and in those bacteria that undergo differentiation, in morphogenesis control. The chain is GTPase Obg from Bacillus licheniformis (strain ATCC 14580 / DSM 13 / JCM 2505 / CCUG 7422 / NBRC 12200 / NCIMB 9375 / NCTC 10341 / NRRL NRS-1264 / Gibson 46).